A 1270-amino-acid chain; its full sequence is Myosin-3 (1270 aa).

The segment at 1-20 (MAVIKKGARRKDVKEPKKRS) is disordered. Positions 36–715 (VGVSDLTLLS…SLFALEDMRD (680 aa)) constitute a Myosin motor domain. 129-136 (GESGAGKT) contacts ATP. Position 357 is a phosphoserine (serine 357). The tract at residues 404-486 (SIGILDIYGF…PGILAAMNDS (83 aa)) is actin-binding. IQ domains follow at residues 719 to 739 (YNMA…RIDA) and 740 to 765 (AIKI…YGTK). The TH1 domain maps to 771–961 (KERRSMSLLG…TIYVRRGHPA (191 aa)). Disordered stretches follow at residues 951 to 1015 (STIY…QKPV), 1029 to 1136 (YNPK…GSSS), and 1215 to 1270 (VQFG…DDDW). The span at 980-1000 (IKSKKSKHKSTHKHTHSHRSH) shows a compositional bias: basic residues. Over residues 1066–1078 (KKASSSHKSSSAK) the composition is skewed to low complexity. The span at 1089-1098 (GVEKNKEPLK) shows a compositional bias: basic and acidic residues. Residues 1107–1116 (PIPPPPPPMG) are compositionally biased toward pro residues. An SH3 domain is found at 1118-1180 (PKDPKFEAAY…PTAYMTPYKD (63 aa)). A compositionally biased stretch (polar residues) spans 1215–1234 (VQFGSATVGPTSDNQSNPVG). Residues 1256–1270 (ADDDDNDDGDDDDDW) show a composition bias toward acidic residues.

This sequence belongs to the TRAFAC class myosin-kinesin ATPase superfamily. Myosin family. Interacts (via myosin motor domain) with SHE4; this interaction is important for proper localization and may regulate the interaction of the motor domain with actin. Interacts (via SH3 domain) with VRP1; this interaction is required for localization to sites of polarized growth and may regulate the interaction of the tail domain with actin. Interacts (via SH3 domain) with PAN1; this interaction is important for late stages of endocytopsis. Interacts (via SH3 domain) with BBC1 and LAS17. Interacts (via C-terminal acidic tail) with ARC19 and ARC40; ARC19 and ARC40 are Arp2/3 complex subunits. In terms of processing, phosphorylation of the TEDS site (Ser-357) is required for the polarization of the actin cytoskeleton and for ligand-induced, but not for constitutive internalization of STE2. Phosphorylation probably activates the myosin-I ATPase. Ser-357 is phosphorylated by CLA4 and STE20 in vitro.

It is found in the cytoplasm. It localises to the cytoskeleton. Its subcellular location is the actin patch. One of two redundant type-I myosins implicated in the organization of the actin cytoskeleton. Required for proper actin cytoskeleton polarization and for the internalization step in endocytosis. At the cell cortex, assembles in patch-like structures together with proteins from the actin-polymerizing machinery and promotes actin assembly. Functions redundantly with LAS17 as actin nucleation-promoting factor (NPF) for the Arp2/3 complex. Motor domain phosphorylation by PAK kinases CLA4 and STE20 promotes CDC42-regulated actin assembly. Functions together with the NPF PAN1 in late stages of endocytosis. Motor domain phosphorylation by PDK1 kinases PKH1 and PKH2, and by SGK kinases YPK1 and YPK2, promotes ligand-induced, but not constitutive endocytosis of the G protein-coupled receptor STE2. This Saccharomyces cerevisiae (strain YJM789) (Baker's yeast) protein is Myosin-3 (MYO3).